The primary structure comprises 214 residues: Threonylcarbamoyl-AMP synthase (214 aa).

The 206-residue stretch at 9-214 folds into the YrdC-like domain; that stretch reads TDSTIQAATW…GDALTGQVIR (206 aa).

Belongs to the SUA5 family. TsaC subfamily.

Its subcellular location is the cytoplasm. It carries out the reaction L-threonine + hydrogencarbonate + ATP = L-threonylcarbamoyladenylate + diphosphate + H2O. In terms of biological role, required for the formation of a threonylcarbamoyl group on adenosine at position 37 (t(6)A37) in tRNAs that read codons beginning with adenine. Catalyzes the conversion of L-threonine, HCO(3)(-)/CO(2) and ATP to give threonylcarbamoyl-AMP (TC-AMP) as the acyladenylate intermediate, with the release of diphosphate. This is Threonylcarbamoyl-AMP synthase from Psychrobacter cryohalolentis (strain ATCC BAA-1226 / DSM 17306 / VKM B-2378 / K5).